Reading from the N-terminus, the 422-residue chain is Glutamyl-tRNA reductase (422 aa).

Substrate is bound by residues Thr49 to Arg52, Ser108, Glu113 to Gln115, and Gln119. Residue Cys50 is the Nucleophile of the active site. Position 188 to 193 (Gly188 to Ile193) interacts with NADP(+).

It belongs to the glutamyl-tRNA reductase family. As to quaternary structure, homodimer.

The catalysed reaction is (S)-4-amino-5-oxopentanoate + tRNA(Glu) + NADP(+) = L-glutamyl-tRNA(Glu) + NADPH + H(+). It participates in porphyrin-containing compound metabolism; protoporphyrin-IX biosynthesis; 5-aminolevulinate from L-glutamyl-tRNA(Glu): step 1/2. Catalyzes the NADPH-dependent reduction of glutamyl-tRNA(Glu) to glutamate 1-semialdehyde (GSA). The protein is Glutamyl-tRNA reductase of Marinomonas sp. (strain MWYL1).